Consider the following 217-residue polypeptide: Enolase-phosphatase E1 (217 aa).

Asp-9 and Glu-11 together coordinate Mg(2+). Substrate-binding positions include 112–113 (SS) and Lys-151. Asp-176 contacts Mg(2+).

Belongs to the HAD-like hydrolase superfamily. MasA/MtnC family. In terms of assembly, monomer. Mg(2+) is required as a cofactor.

Its subcellular location is the cytoplasm. It is found in the nucleus. The catalysed reaction is 5-methylsulfanyl-2,3-dioxopentyl phosphate + H2O = 1,2-dihydroxy-5-(methylsulfanyl)pent-1-en-3-one + phosphate. It participates in amino-acid biosynthesis; L-methionine biosynthesis via salvage pathway; L-methionine from S-methyl-5-thio-alpha-D-ribose 1-phosphate: step 3/6. Its pathway is amino-acid biosynthesis; L-methionine biosynthesis via salvage pathway; L-methionine from S-methyl-5-thio-alpha-D-ribose 1-phosphate: step 4/6. Functionally, bifunctional enzyme that catalyzes the enolization of 2,3-diketo-5-methylthiopentyl-1-phosphate (DK-MTP-1-P) into the intermediate 2-hydroxy-3-keto-5-methylthiopentenyl-1-phosphate (HK-MTPenyl-1-P), which is then dephosphorylated to form the acireductone 1,2-dihydroxy-3-keto-5-methylthiopentene (DHK-MTPene). This is Enolase-phosphatase E1 from Lachancea thermotolerans (strain ATCC 56472 / CBS 6340 / NRRL Y-8284) (Yeast).